The sequence spans 691 residues: Elongation factor G (691 aa).

Residues 10-284 (KRLRNIGIAA…AVVDYLPSPL (275 aa)) form the tr-type G domain. Residues 19–26 (AHIDAGKT), 83–87 (DTPGH), and 137–140 (NKMD) contribute to the GTP site.

Belongs to the TRAFAC class translation factor GTPase superfamily. Classic translation factor GTPase family. EF-G/EF-2 subfamily.

The protein resides in the cytoplasm. Its function is as follows. Catalyzes the GTP-dependent ribosomal translocation step during translation elongation. During this step, the ribosome changes from the pre-translocational (PRE) to the post-translocational (POST) state as the newly formed A-site-bound peptidyl-tRNA and P-site-bound deacylated tRNA move to the P and E sites, respectively. Catalyzes the coordinated movement of the two tRNA molecules, the mRNA and conformational changes in the ribosome. The sequence is that of Elongation factor G (fusA) from Thermus thermophilus (strain ATCC 27634 / DSM 579 / HB8).